A 151-amino-acid chain; its full sequence is HTH-type transcriptional regulator FL11 (151 aa).

One can recognise an HTH asnC-type domain in the interval 5–66 (LDEIDRRIIK…IVNPEALGYS (62 aa)). A DNA-binding region (H-T-H motif) is located at residues 24-43 (LREISKITGLAESTIHERIK). 98–104 (ETTGDYD) is an L-arginine binding site. Residues asparagine 118, aspartate 122, and 133-135 (THT) contribute to the L-lysine site. Residues aspartate 122 and 133-135 (THT) contribute to the L-arginine site.

In terms of assembly, homodimer. Binds DNA as a dimer and an octamer.

Its activity is regulated as follows. In the famine mode, FL11 forms dimers and acts as a repressor, leading to growth arrest. In the feast mode, in the presence of high concentrations of lysine or arginine, four dimers assemble into an octamer and cover the fl11 and lysine biosynthesis promoters. This leads to the inhibition of fl11 expression and lysine biosynthesis, decrease of the FL11 concentration in the cell, derepression of the target genes and activation of the metabolism. Its function is as follows. DNA-binding protein involved in the repression of transcription of a large number of genes, thereby arresting growth, in response to environmental changes. This Pyrococcus abyssi (strain GE5 / Orsay) protein is HTH-type transcriptional regulator FL11.